We begin with the raw amino-acid sequence, 548 residues long: Putative F-box protein At1g33020 (548 aa).

Residues 4 to 53 form the F-box domain; it reads AENLDSIPTDLILEIFSRMSTKSIGRCRCVSKLWKSMLGHPYFTELFLTR. Residues 380–404 form a disordered region; sequence KPISPPKQKPKPPSTETSSREDHQG. The span at 382–392 shows a compositional bias: pro residues; the sequence is ISPPKQKPKPP.

In Arabidopsis thaliana (Mouse-ear cress), this protein is Putative F-box protein At1g33020.